The chain runs to 131 residues: Histone H3-like 4 (131 aa).

An N6,N6,N6-trimethyllysine; alternate modification is found at K10. N6,N6-dimethyllysine; alternate is present on K10. K10 is subject to N6-acetyllysine; alternate. Position 10 is an N6-methyllysine; alternate (K10). T12 carries the post-translational modification Phosphothreonine. K15 carries the post-translational modification N6-acetyllysine. The residue at position 27 (S27) is a Phosphoserine. Residue K32 is modified to N6,N6,N6-trimethyllysine; alternate. At K32 the chain carries N6,N6-dimethyllysine; alternate. Position 32 is an N6-methyllysine; alternate (K32).

It belongs to the histone H3 family. In terms of assembly, the nucleosome is a histone octamer containing two molecules each of H2A, H2B, H3 and H4 assembled in one H3-H4 heterotetramer and two H2A-H2B heterodimers. The octamer wraps approximately 147 bp of DNA. As to expression, expressed in roots, seedlings, leaves buds and open flowers.

The protein resides in the nucleus. Its subcellular location is the chromosome. Core component of nucleosome. Nucleosomes wrap and compact DNA into chromatin, limiting DNA accessibility to the cellular machineries which require DNA as a template. Histones thereby play a central role in transcription regulation, DNA repair, DNA replication and chromosomal stability. DNA accessibility is regulated via a complex set of post-translational modifications of histones, also called histone code, and nucleosome remodeling. In Arabidopsis thaliana (Mouse-ear cress), this protein is Histone H3-like 4.